The sequence spans 155 residues: Xanthine-guanine phosphoribosyltransferase (155 aa).

5-phospho-alpha-D-ribose 1-diphosphate is bound by residues 37-38, R69, and 90-98; these read RG and DDLVDTGGT. Residue R69 participates in GMP binding. D91 serves as a coordination point for Mg(2+). Guanine is bound by residues D94 and I137. Positions 94 and 137 each coordinate xanthine. GMP is bound by residues 94–98 and 136–137; these read DTGGT and WI.

It belongs to the purine/pyrimidine phosphoribosyltransferase family. XGPT subfamily. In terms of assembly, homotetramer. Mg(2+) serves as cofactor.

Its subcellular location is the cell inner membrane. It carries out the reaction GMP + diphosphate = guanine + 5-phospho-alpha-D-ribose 1-diphosphate. It catalyses the reaction XMP + diphosphate = xanthine + 5-phospho-alpha-D-ribose 1-diphosphate. The enzyme catalyses IMP + diphosphate = hypoxanthine + 5-phospho-alpha-D-ribose 1-diphosphate. It functions in the pathway purine metabolism; GMP biosynthesis via salvage pathway; GMP from guanine: step 1/1. Its pathway is purine metabolism; XMP biosynthesis via salvage pathway; XMP from xanthine: step 1/1. In terms of biological role, purine salvage pathway enzyme that catalyzes the transfer of the ribosyl-5-phosphate group from 5-phospho-alpha-D-ribose 1-diphosphate (PRPP) to the N9 position of the 6-oxopurines guanine and xanthine to form the corresponding ribonucleotides GMP (guanosine 5'-monophosphate) and XMP (xanthosine 5'-monophosphate), with the release of PPi. To a lesser extent, also acts on hypoxanthine. This chain is Xanthine-guanine phosphoribosyltransferase, found in Aeromonas salmonicida (strain A449).